The sequence spans 1097 residues: Kinesin-like protein KIF1C (1097 aa).

The Kinesin motor domain maps to 5–347; the sequence is SVKVAVRVRP…LRYADRTKQI (343 aa). 96-103 provides a ligand contact to ATP; sequence GQTGAGKS. Phosphoserine is present on serine 294. Residues 358 to 380 are a coiled coil; that stretch reads NARLIRELQEEVARLRELLMAQG. The tract at residues 397 to 434 is disordered; sequence GGVLPAASSPPAPASPSSPPPHNGELEPSFSPSAEPQI. Over residues 404–418 the composition is skewed to pro residues; sequence SSPPAPASPSSPPPH. Residues 437–478 adopt a coiled-coil conformation; that stretch reads EEAMERLQETEKIIAELNETWEEKLRKTEALRMEREALLAEM. The residue at position 491 (serine 491) is a Phosphoserine. Residues 520–587 enclose the FHA domain; that stretch reads TRVGQVDVDI…LKSGNRIVMG (68 aa). Positions 630–671 form a coiled coil; sequence EQQGIDIKLEMEKRLQDLENQYRKEKEEADLLLEQQRLYADS. Residues serine 671 and serine 673 each carry the phosphoserine modification. The stretch at 824–868 forms a coiled coil; that stretch reads AEVEDLRAHIDKLTGILQEVKLQNSSKDRELQALRDRMLRMERVI. Disordered stretches follow at residues 897 to 921 and 946 to 1097; these read EAVS…ERVS and QGLQ…GAAV. Phosphoserine is present on serine 911. A compositionally biased stretch (gly residues) spans 949–958; that stretch reads QGSGGRGGGL. Positions 997 to 1015 are enriched in pro residues; sequence GPQPPEEVTAPPPPPNRRP. Over residues 1016 to 1026 the composition is skewed to basic residues; it reads PSPRRPHRPRR. Serine 1028 carries the post-translational modification Phosphoserine. Residue arginine 1036 is modified to Omega-N-methylarginine. Over residues 1059-1077 the composition is skewed to pro residues; it reads QPQPYPAQRPGPRYPPYTT. Phosphothreonine is present on threonine 1077. Serine 1086 is subject to Phosphoserine. Over residues 1086-1097 the composition is skewed to basic and acidic residues; sequence SAPDLKESGAAV.

It belongs to the TRAFAC class myosin-kinesin ATPase superfamily. Kinesin family. Unc-104 subfamily.

Its subcellular location is the cytoplasm. It is found in the cytoskeleton. Functionally, probable motor protein. This is Kinesin-like protein KIF1C (Kif1c) from Rattus norvegicus (Rat).